The primary structure comprises 572 residues: Moesin/ezrin/radixin homolog 1 (572 aa).

One can recognise an FERM domain in the interval 1-291 (MNVRVTTMDA…GNHELYMRRR (291 aa)). The segment at 456–491 (TTTPSHHHVEEEEEMDNEEELVNGENGNQDFSKDFD) is disordered. The segment covering 466–477 (EEEEMDNEEELV) has biased composition (acidic residues). The residue at position 553 (Thr-553) is a Phosphothreonine.

As to quaternary structure, interacts with cytoskeletal actin.

The protein localises to the cell junction. It localises to the adherens junction. It is found in the cell projection. The protein resides in the microvillus. Its subcellular location is the rhabdomere. The protein localises to the cell membrane. It localises to the cytoplasm. It is found in the cytoskeleton. Its function is as follows. Involved in connections of major cytoskeletal structures to the plasma membrane. In Culex quinquefasciatus (Southern house mosquito), this protein is Moesin/ezrin/radixin homolog 1.